Consider the following 23-residue polypeptide: Magainin-R1 (23 aa).

In terms of tissue distribution, expressed by the skin glands.

It localises to the secreted. Functionally, antimicrobial peptide. This is Magainin-R1 from Xenopus ruwenzoriensis (Uganda clawed frog).